The sequence spans 96 residues: Protein transport protein Sec61 subunit beta (96 aa).

The segment covering 1–17 (MPGPTPSGTNVGSSGRS) has biased composition (polar residues). The tract at residues 1–54 (MPGPTPSGTNVGSSGRSPSKAVAARAAGSTVRQRKNASCGTRSAGRTTSAGTGG) is disordered. Position 2 is an N-acetylproline (Pro-2). The Cytoplasmic portion of the chain corresponds to 2-70 (PGPTPSGTNV…EDSPGLKVGP (69 aa)). Ser-7 is modified (phosphoserine). At Thr-9 the chain carries Phosphothreonine. 3 positions are modified to phosphoserine: Ser-13, Ser-14, and Ser-17. Residue Cys-39 is the site of S-palmitoyl cysteine attachment. A compositionally biased stretch (low complexity) spans 40 to 50 (GTRSAGRTTSA). A helical membrane pass occupies residues 71–91 (VPVLVMSLLFIAAVFMLHIWG).

This sequence belongs to the SEC61-beta family. The SEC61 channel-forming translocon complex consists of channel-forming core components SEC61A1, SEC61B and SEC61G and different auxiliary components such as SEC62 and SEC63. The SEC61 channel associates with the multi-pass translocon (MPT) complex. Interacts with TRAM1.

It is found in the endoplasmic reticulum membrane. Its function is as follows. Component of SEC61 channel-forming translocon complex that mediates transport of signal peptide-containing precursor polypeptides across the endoplasmic reticulum (ER). Forms a ribosome receptor and a gated pore in the ER membrane, both functions required for cotranslational translocation of nascent polypeptides. The SEC61 channel is also involved in ER membrane insertion of transmembrane proteins: it mediates membrane insertion of the first few transmembrane segments of proteins, while insertion of subsequent transmembrane regions of multi-pass membrane proteins is mediated by the multi-pass translocon (MPT) complex. The SEC61 channel cooperates with the translocating protein TRAM1 to import nascent proteins into the ER. Required for PKD1/Polycystin-1 biogenesis. This Mus musculus (Mouse) protein is Protein transport protein Sec61 subunit beta.